The sequence spans 326 residues: Tryptophan--tRNA ligase (326 aa).

ATP contacts are provided by residues 11–13 (QPT) and 19–20 (GN). A 'HIGH' region motif is present at residues 12–20 (PTGQIHLGN). L-tryptophan is bound at residue Asp-135. Residues 147 to 149 (GED), Val-186, and 195 to 199 (KMSKS) contribute to the ATP site. Positions 195–199 (KMSKS) match the 'KMSKS' region motif.

The protein belongs to the class-I aminoacyl-tRNA synthetase family. Homodimer.

The protein localises to the cytoplasm. The enzyme catalyses tRNA(Trp) + L-tryptophan + ATP = L-tryptophyl-tRNA(Trp) + AMP + diphosphate + H(+). Its function is as follows. Catalyzes the attachment of tryptophan to tRNA(Trp). The polypeptide is Tryptophan--tRNA ligase (Helicobacter pylori (strain J99 / ATCC 700824) (Campylobacter pylori J99)).